We begin with the raw amino-acid sequence, 122 residues long: Small ribosomal subunit protein uS13 (122 aa).

The disordered stretch occupies residues 99 to 122 (RGQRTHTNARTRKGPAKAIAGKKK).

It belongs to the universal ribosomal protein uS13 family. In terms of assembly, part of the 30S ribosomal subunit. Forms a loose heterodimer with protein S19. Forms two bridges to the 50S subunit in the 70S ribosome.

Functionally, located at the top of the head of the 30S subunit, it contacts several helices of the 16S rRNA. In the 70S ribosome it contacts the 23S rRNA (bridge B1a) and protein L5 of the 50S subunit (bridge B1b), connecting the 2 subunits; these bridges are implicated in subunit movement. Contacts the tRNAs in the A and P-sites. The polypeptide is Small ribosomal subunit protein uS13 (Rhizobium etli (strain ATCC 51251 / DSM 11541 / JCM 21823 / NBRC 15573 / CFN 42)).